We begin with the raw amino-acid sequence, 82 residues long: UPF0180 protein BC_1394 (82 aa).

Belongs to the UPF0180 family.

The polypeptide is UPF0180 protein BC_1394 (Bacillus cereus (strain ATCC 14579 / DSM 31 / CCUG 7414 / JCM 2152 / NBRC 15305 / NCIMB 9373 / NCTC 2599 / NRRL B-3711)).